The primary structure comprises 366 residues: MKQPYLLLTPGPLSTTASVKDAMQIDYCTWDSDYRHVTETIRQQILAMAQANPENYTTVLLQGSGSFGVEATIGTAVPRTDATLMIAINGAYGHRISQIAEYYDIPHIDVVFNEDEAVDPVRIEATLADHPEITHFATVHSETTTGILNPIEALMPIMHEHGIVTIIDAMSSLGGVPISIDELDCDYLISSANKCVQGVPGFAFIIAKQATLAHTADNARSLCLDLYDQWQAMTKQPGKWRFTSPTHVVHAFAQALIELQAEGGVTPRYQRYRASQQLLSDGLQALGFELVIDPAIQGPIITSFKYPNVDFDFADFYQFIKQRGFVIYPGKVSNIPSFRIGTIGDVDTTDIQRLLTIIGDYQQLHR.

Lys-194 is subject to N6-(pyridoxal phosphate)lysine.

The protein belongs to the class-V pyridoxal-phosphate-dependent aminotransferase family. PhnW subfamily. In terms of assembly, homodimer. The cofactor is pyridoxal 5'-phosphate.

The catalysed reaction is (2-aminoethyl)phosphonate + pyruvate = phosphonoacetaldehyde + L-alanine. Involved in phosphonate degradation. This is 2-aminoethylphosphonate--pyruvate transaminase from Lactiplantibacillus plantarum (strain ATCC BAA-793 / NCIMB 8826 / WCFS1) (Lactobacillus plantarum).